A 346-amino-acid chain; its full sequence is 3-keto-steroid reductase ERG27 (346 aa).

NADP(+) is bound by residues leucine 19, threonine 42, and lysine 48. Residues serine 182 and tyrosine 205 each act as proton donor in the active site. Positions 205, 209, and 241 each coordinate NADP(+). The active-site Lowers pKa of active site Tyr is lysine 209. Residues 242 to 262 (FSFFQYLNVFTYYGMLFLFYL) traverse the membrane as a helical segment. Asparagine 272 carries N-linked (GlcNAc...) asparagine glycosylation.

The protein belongs to the short-chain dehydrogenases/reductases (SDR) family. ERG27 subfamily. In terms of assembly, heterotetramer of ERG25, ERG26, ERG27 and ERG28. ERG28 acts as a scaffold to tether ERG27 and other 4,4-demethylation-related enzymes, forming a demethylation enzyme complex, in the endoplasmic reticulum. Interacts with ERG25 and ERG28. Also interacts with ERG7, but only in lipid particles.

It is found in the endoplasmic reticulum membrane. The protein localises to the lipid droplet. The enzyme catalyses 3-dehydro-4alpha-methylzymosterol + NADPH + H(+) = 4alpha-methylzymosterol + NADP(+). Its pathway is steroid biosynthesis; zymosterol biosynthesis; zymosterol from lanosterol: step 5/6. In terms of biological role, 3-keto-steroid reductase; part of the third module of ergosterol biosynthesis pathway that includes the late steps of the pathway. ERG27 is a catalytic component of the C-4 demethylation complex that catalyzes the reduction of the keto group on the C-3. The third module or late pathway involves the ergosterol synthesis itself through consecutive reactions that mainly occur in the endoplasmic reticulum (ER) membrane. Firstly, the squalene synthase ERG9 catalyzes the condensation of 2 farnesyl pyrophosphate moieties to form squalene, which is the precursor of all steroids. Squalene synthase is crucial for balancing the incorporation of farnesyl diphosphate (FPP) into sterol and nonsterol isoprene synthesis. Secondly, the squalene epoxidase ERG1 catalyzes the stereospecific oxidation of squalene to (S)-2,3-epoxysqualene, which is considered to be a rate-limiting enzyme in steroid biosynthesis. Then, the lanosterol synthase ERG7 catalyzes the cyclization of (S)-2,3 oxidosqualene to lanosterol, a reaction that forms the sterol core. In the next steps, lanosterol is transformed to zymosterol through a complex process involving various demethylation, reduction and desaturation reactions. The lanosterol 14-alpha-demethylase ERG11 (also known as CYP51) catalyzes C14-demethylation of lanosterol to produce 4,4'-dimethyl cholesta-8,14,24-triene-3-beta-ol, which is critical for ergosterol biosynthesis. The C-14 reductase ERG24 reduces the C14=C15 double bond of 4,4-dimethyl-cholesta-8,14,24-trienol to produce 4,4-dimethyl-cholesta-8,24-dienol. 4,4-dimethyl-cholesta-8,24-dienol is substrate of the C-4 demethylation complex ERG25-ERG26-ERG27 in which ERG25 catalyzes the three-step monooxygenation required for the demethylation of 4,4-dimethyl and 4alpha-methylsterols, ERG26 catalyzes the oxidative decarboxylation that results in a reduction of the 3-beta-hydroxy group at the C-3 carbon to an oxo group, and ERG27 is responsible for the reduction of the keto group on the C-3. ERG28 has a role as a scaffold to help anchor ERG25, ERG26 and ERG27 to the endoplasmic reticulum and ERG29 regulates the activity of the iron-containing C4-methylsterol oxidase ERG25. Then, the sterol 24-C-methyltransferase ERG6 catalyzes the methyl transfer from S-adenosyl-methionine to the C-24 of zymosterol to form fecosterol. The C-8 sterol isomerase ERG2 catalyzes the reaction which results in unsaturation at C-7 in the B ring of sterols and thus converts fecosterol to episterol. The sterol-C5-desaturase ERG3 then catalyzes the introduction of a C-5 double bond in the B ring to produce 5-dehydroepisterol. The C-22 sterol desaturase ERG5 further converts 5-dehydroepisterol into ergosta-5,7,22,24(28)-tetraen-3beta-ol by forming the C-22(23) double bond in the sterol side chain. Finally, ergosta-5,7,22,24(28)-tetraen-3beta-ol is substrate of the C-24(28) sterol reductase ERG4 to produce ergosterol. Its function is as follows. Facilitates the association of ERG7 with lipid particles preventing its digestion in the endoplasmic reticulum and the lipid particles. The chain is 3-keto-steroid reductase ERG27 from Candida albicans (Yeast).